Reading from the N-terminus, the 598-residue chain is Peroxisomal targeting signal receptor (598 aa).

3 disordered regions span residues 1 to 54, 135 to 154, and 208 to 237; these read MSFM…GEMS, RGGS…MQGG, and AVGK…TTTE. The segment covering 9–22 has biased composition (polar residues); sequence ECSTGRNPLSQFTK. Cys10 is covalently cross-linked (Glycyl cysteine thioester (Cys-Gly) (interchain with G-Cter in ubiquitin)). Lys22 is covalently cross-linked (Glycyl lysine isopeptide (Lys-Gly) (interchain with G-Cter in ubiquitin)). Positions 23–35 are enriched in basic and acidic residues; sequence HTAEDRSLQHDRV. Residues 220 to 233 are compositionally biased toward low complexity; that stretch reads AETATATETVTETE. TPR repeat units follow at residues 304-337, 338-371, 372-409, 410-447, 448-481, 482-515, and 516-549; these read PDPF…NTEH, AEAW…EPGN, LSAL…VVDQ, ARNQ…ANID, ADVQ…RPDD, ALLW…RPSF, and VRAR…HKVE.

This sequence belongs to the peroxisomal targeting signal receptor family. In terms of processing, ubiquitination at Cys-10 is UBC4-independent but requires the presence of PEX4. Ubiquitination at Lys-22 is UBC4-dependent.

The protein localises to the cytoplasm. Its subcellular location is the peroxisome membrane. Its function is as follows. Binds to the C-terminal PTS1-type tripeptide peroxisomal targeting signal (SKL-type) and plays an essential role in peroxisomal protein import. The sequence is that of Peroxisomal targeting signal receptor (PAY32) from Yarrowia lipolytica (strain CLIB 122 / E 150) (Yeast).